Reading from the N-terminus, the 221-residue chain is Endo-1,4-beta-xylanase 1 (221 aa).

Residues 1-22 (MKFFATIAALVVAAVAAPVAEA) form the signal peptide. Residues 29–221 (PMLIERAGPG…GTGSASVTVS (193 aa)) form the GH11 domain. Catalysis depends on Glu114, which acts as the Nucleophile. The active-site Proton donor is the Glu208.

This sequence belongs to the glycosyl hydrolase 11 (cellulase G) family.

The protein resides in the secreted. The enzyme catalyses Endohydrolysis of (1-&gt;4)-beta-D-xylosidic linkages in xylans.. It functions in the pathway glycan degradation; xylan degradation. Its function is as follows. Endo-1,4-beta-xylanase involved in the hydrolysis of xylan, a major structural heterogeneous polysaccharide found in plant biomass representing the second most abundant polysaccharide in the biosphere, after cellulose. Hydrolyzes xylans from oat spelt and birchwood at similar rates, but it has no detectable activity toward Avicel or carboxymethyl cellulose. The chain is Endo-1,4-beta-xylanase 1 (xynI) from Aureobasidium pullulans (Black yeast).